The following is a 509-amino-acid chain: MNTAPTTDNNAVRKHDVRPELFVDGYEVVIGIEIHCQLNTESKIFSSAPTDFGHEPNTQASIVDLGLPGVLPVLNAGVVDRALKFGIGVNAELGLFNTFDRKNYFYPDLPKGYQITQMANPIVGEGYIDVVVNEGEKNEYPKRMGITRAHLEEDAGKSVHDAVDGMTGVDLNRAGTPLIEIVSEPDMRSAHEALAYIKAIHQLVTWLGISDAIMAEGSFRCDCNVSIRKPGAELGTRTELKNLNSFRFIERAINREIERQIDILEDGGKVVQATMLYDPERDETRVMRTKEDANDYRYFPDPDLLPVRIEQLTVDSIRAAMPELPVARRARFEEALGLSEYDARILTGSRQIADYFEDVVAEIDQQDAKMAANWVMGDLLGALNKDDKDIIDSPISAKQLAGMLARIKDDTLSGKLAKKVFGALYERAGGDADDAADKIIEEKGLKQETDTGAIKAIVEEVIAKNTAMVEEYRGGKEKAFNGLVGQVMKASRGSANPQQVNQILKELLD.

Belongs to the GatB/GatE family. GatB subfamily. As to quaternary structure, heterotrimer of A, B and C subunits.

It catalyses the reaction L-glutamyl-tRNA(Gln) + L-glutamine + ATP + H2O = L-glutaminyl-tRNA(Gln) + L-glutamate + ADP + phosphate + H(+). The catalysed reaction is L-aspartyl-tRNA(Asn) + L-glutamine + ATP + H2O = L-asparaginyl-tRNA(Asn) + L-glutamate + ADP + phosphate + 2 H(+). Its function is as follows. Allows the formation of correctly charged Asn-tRNA(Asn) or Gln-tRNA(Gln) through the transamidation of misacylated Asp-tRNA(Asn) or Glu-tRNA(Gln) in organisms which lack either or both of asparaginyl-tRNA or glutaminyl-tRNA synthetases. The reaction takes place in the presence of glutamine and ATP through an activated phospho-Asp-tRNA(Asn) or phospho-Glu-tRNA(Gln). The protein is Aspartyl/glutamyl-tRNA(Asn/Gln) amidotransferase subunit B of Psychrobacter arcticus (strain DSM 17307 / VKM B-2377 / 273-4).